Here is a 512-residue protein sequence, read N- to C-terminus: Sucrose-6-phosphate hydrolase (512 aa).

Residues 40–43, Gln59, Trp67, 102–103, 165–166, Glu229, and Trp311 contribute to the substrate site; these read WMND, FS, and RD. Residue Asp43 is part of the active site.

This sequence belongs to the glycosyl hydrolase 32 family.

It is found in the cytoplasm. It carries out the reaction Hydrolysis of terminal non-reducing beta-D-fructofuranoside residues in beta-D-fructofuranosides.. It functions in the pathway glycan biosynthesis; sucrose metabolism. This Zymomonas mobilis subsp. mobilis (strain ATCC 10988 / DSM 424 / LMG 404 / NCIMB 8938 / NRRL B-806 / ZM1) protein is Sucrose-6-phosphate hydrolase (sacA).